The sequence spans 588 residues: ATP-dependent lipid A-core flippase (588 aa).

The next 6 membrane-spanning stretches (helical) occupy residues 23–43, 56–76, 141–161, 162–182, 257–277, and 278–298; these read FWPV…IDAG, FITI…IGIT, DALT…TVMM, VICW…GIIV, LVIA…STVI, and TISA…IKPM. Residues 28–310 enclose the ABC transmembrane type-1 domain; that stretch reads LLGVLANILY…LTTLNATIQR (283 aa). Residues 342–576 form the ABC transporter domain; sequence IEFKHVYHAY…DGHYAQLYKV (235 aa). An ATP-binding site is contributed by 375-382; the sequence is GHSGSGKT.

Belongs to the ABC transporter superfamily. Lipid exporter (TC 3.A.1.106) family. As to quaternary structure, homodimer.

Its subcellular location is the cell inner membrane. It catalyses the reaction ATP + H2O + lipid A-core oligosaccharideSide 1 = ADP + phosphate + lipid A-core oligosaccharideSide 2.. Involved in lipopolysaccharide (LPS) biosynthesis. Translocates lipid A-core from the inner to the outer leaflet of the inner membrane. Transmembrane domains (TMD) form a pore in the inner membrane and the ATP-binding domain (NBD) is responsible for energy generation. The protein is ATP-dependent lipid A-core flippase of Legionella pneumophila (strain Paris).